The sequence spans 145 residues: Probable transport accessory protein MmpS2 (145 aa).

The helical transmembrane segment at 11–31 (MWLLLAIVVVAVVGGLGIYRL) threads the bilayer.

This sequence belongs to the MmpS family.

Its subcellular location is the cell membrane. This Mycobacterium bovis (strain ATCC BAA-935 / AF2122/97) protein is Probable transport accessory protein MmpS2 (mmpS2).